Here is an 856-residue protein sequence, read N- to C-terminus: Serine/threonine-protein kinase unc-51 (856 aa).

The 267-residue stretch at 9 to 275 (YSKRDLLGHG…FEDFFNHPFL (267 aa)) folds into the Protein kinase domain. ATP contacts are provided by residues 15–23 (LGHGAFAIV) and K39. Catalysis depends on D134, which acts as the Proton acceptor. The tract at residues 304–327 (PQSSLPVPKRAGSTKLDSPTPVRR) is disordered. An LIR motif is present at residues 358 to 361 (FTFL). 3 disordered regions span residues 362 to 391 (PPRQ…PVPV), 405 to 471 (LAAA…ERMT), and 520 to 582 (PTTT…PTEP). Polar residues predominate over residues 365–385 (QESSPVKQVQVHTNVSPSLTT). Residues 411–436 (TAVPSSSSPTGSAVSAQHQHQHQQQQ) show a composition bias toward low complexity. 2 stretches are compositionally biased toward polar residues: residues 527–536 (IPKSATTANI) and 566–578 (KYQQ…SPTA). The tract at residues 750 to 856 (YHQCLVRSQE…RQGFVAAVNT (107 aa)) is required for interaction with unc-14 and vab-8.

This sequence belongs to the protein kinase superfamily. Ser/Thr protein kinase family. APG1/unc-51/ULK1 subfamily. As to quaternary structure, interacts with unc-14 and vab-8. Interacts (via C-terminus) with atg-13. Interacts (via the LIR motif) with lgg-1; the interaction is direct. The cofactor is Mg(2+).

The enzyme catalyses L-seryl-[protein] + ATP = O-phospho-L-seryl-[protein] + ADP + H(+). It catalyses the reaction L-threonyl-[protein] + ATP = O-phospho-L-threonyl-[protein] + ADP + H(+). Functionally, protein kinase important for axonal elongation and axonal guidance. Functions in the CAN axons to direct both anterior and posterior migrations. Phosphorylates both unc-14 and vab-8. Component of the unc-51/atg-13 complex that is probably recruited by lgg-1 to preautophagosomes and is required for autophagosome formation. Interaction with autophagy related proteins such as atg-13 links it to the autophagy machinery to in turn promote P-granule degradation in somatic cells. Plays a role in mitophagy during limited food availability. Regulates cell size. Plays a role in male tail ray pattern formation. May be required for normal dauer morphogenesis. The polypeptide is Serine/threonine-protein kinase unc-51 (Caenorhabditis elegans).